Reading from the N-terminus, the 314-residue chain is tRNA dimethylallyltransferase 1 (314 aa).

Residue 8–15 coordinates ATP; that stretch reads GPTGTGKS. Residue 10 to 15 coordinates substrate; it reads TGTGKS.

It belongs to the IPP transferase family. In terms of assembly, monomer. The cofactor is Mg(2+).

The enzyme catalyses adenosine(37) in tRNA + dimethylallyl diphosphate = N(6)-dimethylallyladenosine(37) in tRNA + diphosphate. Catalyzes the transfer of a dimethylallyl group onto the adenine at position 37 in tRNAs that read codons beginning with uridine, leading to the formation of N6-(dimethylallyl)adenosine (i(6)A). This is tRNA dimethylallyltransferase 1 from Mycobacterium marinum (strain ATCC BAA-535 / M).